The sequence spans 496 residues: NADH-quinone oxidoreductase subunit N (496 aa).

14 consecutive transmembrane segments (helical) span residues L8 to I28, M37 to F57, Q73 to T93, L110 to M130, Y131 to D151, L162 to L182, T203 to F223, P235 to V255, G271 to F291, M300 to I320, G341 to T361, A386 to V406, V421 to I441, and F464 to A484.

Belongs to the complex I subunit 2 family. In terms of assembly, NDH-1 is composed of 14 different subunits. Subunits NuoA, H, J, K, L, M, N constitute the membrane sector of the complex.

The protein localises to the cell membrane. The catalysed reaction is a quinone + NADH + 5 H(+)(in) = a quinol + NAD(+) + 4 H(+)(out). Functionally, NDH-1 shuttles electrons from NADH, via FMN and iron-sulfur (Fe-S) centers, to quinones in the respiratory chain. The immediate electron acceptor for the enzyme in this species is believed to be a menaquinone. Couples the redox reaction to proton translocation (for every two electrons transferred, four hydrogen ions are translocated across the cytoplasmic membrane), and thus conserves the redox energy in a proton gradient. This is NADH-quinone oxidoreductase subunit N from Desulfitobacterium hafniense (strain DSM 10664 / DCB-2).